A 142-amino-acid polypeptide reads, in one-letter code: Large ribosomal subunit protein uL13 (142 aa).

It belongs to the universal ribosomal protein uL13 family. In terms of assembly, part of the 50S ribosomal subunit.

Its function is as follows. This protein is one of the early assembly proteins of the 50S ribosomal subunit, although it is not seen to bind rRNA by itself. It is important during the early stages of 50S assembly. The chain is Large ribosomal subunit protein uL13 from Halorhodospira halophila (strain DSM 244 / SL1) (Ectothiorhodospira halophila (strain DSM 244 / SL1)).